The chain runs to 37 residues: Small ribosomal subunit protein uS19 (37 aa).

It belongs to the universal ribosomal protein uS19 family.

This is Small ribosomal subunit protein uS19 (RPS15) from Helix lucorum (Snail).